The sequence spans 297 residues: Protein CANDIDATE G-PROTEIN COUPLED RECEPTOR 8 (297 aa).

An N-linked (GlcNAc...) asparagine glycan is attached at asparagine 20. The next 7 membrane-spanning stretches (helical) occupy residues 34-54 (GFLH…YLAY), 70-90 (IMIA…AWCC), 107-127 (LTLF…AFLF), 142-162 (FLIS…FLFG), 180-200 (WGLW…VFLM), 215-235 (FYNY…ASAF), and 242-262 (FGFW…LPLL).

The protein belongs to the UPF0359 family.

The protein localises to the membrane. G-protein coupled receptor. Plays a role in plants and microbes interactions. This chain is Protein CANDIDATE G-PROTEIN COUPLED RECEPTOR 8, found in Arabidopsis thaliana (Mouse-ear cress).